A 478-amino-acid chain; its full sequence is Protein nucleotidyltransferase YdiU (478 aa).

The ATP site is built by Gly-84, Gly-86, Arg-87, Lys-107, Asp-119, Gly-120, Arg-170, and Arg-177. Asp-246 serves as the catalytic Proton acceptor. The Mg(2+) site is built by Asn-247 and Asp-256. ATP is bound at residue Asp-256.

This sequence belongs to the SELO family. Requires Mg(2+) as cofactor. Mn(2+) serves as cofactor.

The catalysed reaction is L-seryl-[protein] + ATP = 3-O-(5'-adenylyl)-L-seryl-[protein] + diphosphate. It catalyses the reaction L-threonyl-[protein] + ATP = 3-O-(5'-adenylyl)-L-threonyl-[protein] + diphosphate. The enzyme catalyses L-tyrosyl-[protein] + ATP = O-(5'-adenylyl)-L-tyrosyl-[protein] + diphosphate. It carries out the reaction L-histidyl-[protein] + UTP = N(tele)-(5'-uridylyl)-L-histidyl-[protein] + diphosphate. The catalysed reaction is L-seryl-[protein] + UTP = O-(5'-uridylyl)-L-seryl-[protein] + diphosphate. It catalyses the reaction L-tyrosyl-[protein] + UTP = O-(5'-uridylyl)-L-tyrosyl-[protein] + diphosphate. Its function is as follows. Nucleotidyltransferase involved in the post-translational modification of proteins. It can catalyze the addition of adenosine monophosphate (AMP) or uridine monophosphate (UMP) to a protein, resulting in modifications known as AMPylation and UMPylation. The protein is Protein nucleotidyltransferase YdiU of Escherichia coli (strain SE11).